The following is a 451-amino-acid chain: Phosphoglucosamine mutase (451 aa).

Serine 102 (phosphoserine intermediate) is an active-site residue. Mg(2+) contacts are provided by serine 102, aspartate 243, aspartate 245, and aspartate 247. A Phosphoserine modification is found at serine 102.

This sequence belongs to the phosphohexose mutase family. It depends on Mg(2+) as a cofactor. Post-translationally, activated by phosphorylation.

It carries out the reaction alpha-D-glucosamine 1-phosphate = D-glucosamine 6-phosphate. Its function is as follows. Catalyzes the conversion of glucosamine-6-phosphate to glucosamine-1-phosphate. This is Phosphoglucosamine mutase from Salinispora tropica (strain ATCC BAA-916 / DSM 44818 / JCM 13857 / NBRC 105044 / CNB-440).